A 791-amino-acid polypeptide reads, in one-letter code: Transient receptor potential cation channel subfamily V member 3 (791 aa).

Disordered regions lie at residues 1–37, 52–71, and 76–113; these read MNAH…LTPT, PNPT…MDSN, and LSGN…EEQR. The Cytoplasmic segment spans residues 1 to 430; the sequence is MNAHSKEMAP…TLEPLHTLLH (430 aa). The span at 95–105 shows a compositional bias: polar residues; sequence ETPSNPNSPSA. 7 ANK repeats span residues 117 to 148, 170 to 198, 214 to 243, 261 to 291, 298 to 330, 340 to 362, and 398 to 420; these read KRLK…LCRR, TCLM…EEND, EGQT…DVNA, FGET…DITS, NILH…RSGN, DGLT…YILS, and TTDN…HEML. A helical membrane pass occupies residues 431-460; it reads TKWKKFAKYMFFLSFCFYFFYNITLTLVSY. Over 461–479 the chain is Extracellular; it reads YRPREDEDLPHPLALTHKM. The helical transmembrane segment at 480-508 threads the bilayer; that stretch reads SWLQLLGRMFVLIWATCISVKEGIAIFLL. At 509 to 519 the chain is on the cytoplasmic side; it reads RPSDLQSILSD. Residues 520-540 form a helical membrane-spanning segment; sequence AWFHFVFFVQAVLVILSVFLY. Topologically, residues 541–545 are extracellular; it reads LFAYK. The helical transmembrane segment at 546–566 threads the bilayer; sequence EYLACLVLAMALGWANMLYYT. Residues 567–569 are Cytoplasmic-facing; it reads RGF. Residues 570-608 traverse the membrane as a helical segment; sequence QSMGMYSVMIQKVILHDVLKFLFVYILFLLGFGVALASL. The Extracellular portion of the chain corresponds to 609-620; the sequence is IEKCSKDKKDCS. The pore-forming intramembrane region spans 621 to 646; the sequence is SYGSFSDAVLELFKLTIGLGDLNIQQ. A Na(+)-binding site is contributed by glycine 638. The Extracellular portion of the chain corresponds to 647 to 649; that stretch reads NST. A helical transmembrane segment spans residues 650–686; that stretch reads YPILFLFLLITYVILTFVLLLNMLIALMGETVENVSK. The Cytoplasmic segment spans residues 687–791; sequence ESERIWRLQR…ELDEFPETSV (105 aa).

Belongs to the transient receptor (TC 1.A.4) family. TrpV subfamily. TRPV3 sub-subfamily. Homotetramer. May convert from a homotetramer to a homopentamer to allow pore dilation. Interacts with TRPV1; may form a heteromeric channel with TRPV1. Interacts with SNX11; this interaction promotes TRPV3 trafficking from the cell membrane to lysosome for degradation. As to expression, expressed in keratinocytes and hair follicles.

It localises to the cell membrane. Its subcellular location is the cytoplasm. It is found in the lysosome. It catalyses the reaction Ca(2+)(in) = Ca(2+)(out). The catalysed reaction is Mg(2+)(in) = Mg(2+)(out). It carries out the reaction Na(+)(in) = Na(+)(out). The enzyme catalyses K(+)(in) = K(+)(out). Its activity is regulated as follows. Activated by cannabinoid that binds to the vanilloid binding pocket. Diphenylboronic anhydride induces pore dilation and enhances cation permeability by promoting the conversion to a homopentamer. Its function is as follows. Non-selective calcium permeant cation channel. It is activated by innocuous (warm) temperatures and shows an increased response at noxious temperatures greater than 39 degrees Celsius. Activation exhibits an outward rectification. The channel pore can dilate to provide permeability to larger cations. May associate with TRPV1 and may modulate its activity. Is a negative regulator of hair growth and cycling: TRPV3-coupled signaling suppresses keratinocyte proliferation in hair follicles and induces apoptosis and premature hair follicle regression (catagen). The polypeptide is Transient receptor potential cation channel subfamily V member 3 (Trpv3) (Mus musculus (Mouse)).